Consider the following 364-residue polypeptide: Mitoferrin-2 (364 aa).

Positions 1–17 are enriched in gly residues; it reads MELEGRGAGGVAGGPAA. 2 disordered regions span residues 1–28 and 40–60; these read MELE…ESAL and GAGG…PDSG. A compositionally biased stretch (low complexity) spans 18 to 27; it reads GPGRSPGESA. Solcar repeat units follow at residues 70–158, 168–252, and 259–352; these read ATVT…LKKT, NSHI…LQEH, and YNPS…FKYL. 6 helical membrane passes run 72–91, 133–152, 170–189, 227–246, 261–280, and 327–346; these read VTTH…CVMY, GLNV…FACY, HIAN…AAMN, SYTT…FMTY, PSSH…AATT, and GVQA…WSVY.

This sequence belongs to the mitochondrial carrier (TC 2.A.29) family. In terms of tissue distribution, ubiquitous. Expressed in placenta, lung, kidney, pancreas, liver, brain, skeletal muscle and heart.

It is found in the mitochondrion inner membrane. The enzyme catalyses Fe(2+)(in) = Fe(2+)(out). In terms of biological role, mitochondrial iron transporter that mediates iron uptake. Probably required for heme synthesis of hemoproteins and Fe-S cluster assembly in non-erythroid cells. In Homo sapiens (Human), this protein is Mitoferrin-2 (SLC25A28).